Consider the following 445-residue polypeptide: Exodeoxyribonuclease 7 large subunit (445 aa).

It belongs to the XseA family. In terms of assembly, heterooligomer composed of large and small subunits.

It localises to the cytoplasm. It catalyses the reaction Exonucleolytic cleavage in either 5'- to 3'- or 3'- to 5'-direction to yield nucleoside 5'-phosphates.. Its function is as follows. Bidirectionally degrades single-stranded DNA into large acid-insoluble oligonucleotides, which are then degraded further into small acid-soluble oligonucleotides. The polypeptide is Exodeoxyribonuclease 7 large subunit (Nautilia profundicola (strain ATCC BAA-1463 / DSM 18972 / AmH)).